The chain runs to 89 residues: Large ribosomal subunit protein bL27 (89 aa).

Residues 1–21 (MAHKKAGGSSRNGRDTEGRRL) form a disordered region.

The protein belongs to the bacterial ribosomal protein bL27 family.

This chain is Large ribosomal subunit protein bL27, found in Granulibacter bethesdensis (strain ATCC BAA-1260 / CGDNIH1).